The sequence spans 397 residues: Argininosuccinate synthase (397 aa).

9–17 serves as a coordination point for ATP; the sequence is AYSGGLDTS. Tyr-85 lines the L-citrulline pocket. Gly-115 contacts ATP. L-aspartate-binding residues include Thr-117, Asn-121, and Asp-122. Asn-121 contributes to the L-citrulline binding site. Residues Arg-125, Ser-173, Glu-258, and Tyr-270 each contribute to the L-citrulline site.

Belongs to the argininosuccinate synthase family. Type 1 subfamily. Homotetramer.

It is found in the cytoplasm. The enzyme catalyses L-citrulline + L-aspartate + ATP = 2-(N(omega)-L-arginino)succinate + AMP + diphosphate + H(+). Its pathway is amino-acid biosynthesis; L-arginine biosynthesis; L-arginine from L-ornithine and carbamoyl phosphate: step 2/3. The protein is Argininosuccinate synthase of Streptococcus suis (strain 05ZYH33).